The sequence spans 604 residues: MRVEDFTPKLIPASPGVYLMKDSSGEVLYIGKAKNLRNRISTYFRKDGDSRERIPFLMKKTTDIETILVSNETEAFLLENNLIKKYHPKYNVLLKDDKTFFCLAISLTHLWPKIDVVRTKAVTSSKKQIIFGPYVSAEACRTLLEVISQWFPLRTCSNREFASRKRPCILYEMKRCLAPCVNLCSHEEYEQTLDKAVLFLKGQISEIVQDLEKSIEKASKEQKFEQAGMYYRTLKLIQQAMEKQHVEKFHFQNIDAIGLYRKYQKTVITVLTIRSGKLLGARHFPFSENAQEDADVLSSFILQYYTNQPQTPKEILTPIPLNIPDLPSLLNKDTPPQLRSPKTGYGRELLNLAKNNAQVHAETTIQSSALPYEELKKILKSPDYPYRIECYDNAHLQGSHAVGVYIVYENDALSPKDYRTFSISSSAYNDLAAFHEVLSRRFISLTSSIPDMILIDGGRTQYAQAKKTLKELNLTGIQVVSIAKEAGNHSGSLKNEKLFCDTFPQGVLLPPTSKLLQFFQKLRDEAHRFALSRHRKKRHKDFLLPKEKIPGIGEIKRKRLLQKFKSWEQVMKASQGELEAIPGLTKKDIQHVLAKQAEDTYLED.

Positions 13 to 92 (ASPGVYLMKD…IKKYHPKYNV (80 aa)) constitute a GIY-YIG domain. Residues 205–240 (SEIVQDLEKSIEKASKEQKFEQAGMYYRTLKLIQQA) form the UVR domain.

It belongs to the UvrC family. In terms of assembly, interacts with UvrB in an incision complex.

It is found in the cytoplasm. In terms of biological role, the UvrABC repair system catalyzes the recognition and processing of DNA lesions. UvrC both incises the 5' and 3' sides of the lesion. The N-terminal half is responsible for the 3' incision and the C-terminal half is responsible for the 5' incision. The sequence is that of UvrABC system protein C from Chlamydia abortus (strain DSM 27085 / S26/3) (Chlamydophila abortus).